The chain runs to 117 residues: DNA-directed RNA polymerase II subunit RPB11 (117 aa).

This sequence belongs to the archaeal Rpo11/eukaryotic RPB11/RPC19 RNA polymerase subunit family. Component of the RNA polymerase II (Pol II) complex consisting of 12 subunits.

Its subcellular location is the nucleus. Its function is as follows. DNA-dependent RNA polymerase catalyzes the transcription of DNA into RNA using the four ribonucleoside triphosphates as substrates. Component of RNA polymerase II which synthesizes mRNA precursors and many functional non-coding RNAs. Pol II is the central component of the basal RNA polymerase II transcription machinery. It is composed of mobile elements that move relative to each other. RPB11 is part of the core element with the central large cleft. This Drosophila melanogaster (Fruit fly) protein is DNA-directed RNA polymerase II subunit RPB11.